Consider the following 425-residue polypeptide: Probable aminotransferase tcpI (425 aa).

Lys-256 carries the post-translational modification N6-(pyridoxal phosphate)lysine.

Belongs to the class-I pyridoxal-phosphate-dependent aminotransferase family. Requires pyridoxal 5'-phosphate as cofactor.

The protein operates within secondary metabolite biosynthesis. Probable aminotransferase; part of the gene cluster that mediates the biosynthesis of an unusual class of epipolythiodioxopiperazines (ETPs) lacking the reactive thiol group important for toxicity. Firstly, L-tyrosine is prenylated by tcpD, before undergoing condensation with L-glycine in a reaction catalyzed by the NRPS tcpP leading to the diketopiperazine (DKP) backbone. Afterwards the alpha-carbon of tyrosine is oxidized by the cytochrome P450 tcpC to form a hydroxyl group. However, in contrast other ETP biosynthesis pathways studied so far, tcpC is not able to bishydroxylate the DKP at both alpha-carbon positions, but hydroxylates the alpha-carbon of the tyrosine part and the nitrogen of the glycine part. The next steps involve an alpha,beta-elimination reaction catalyzed by tcpI, a methylation by the methyltransferase tcpN the action of the four enzyme cascade tcpG/K/J/I. Due to a dysfunctional cytochrome P450 monooxygenase tcpC, the pathway leads to the biosynthesis of probable non-toxic metabolites lacking the reactive thiol group. This chain is Probable aminotransferase tcpI, found in Claviceps purpurea (strain 20.1) (Ergot fungus).